The sequence spans 197 residues: NADH-quinone oxidoreductase subunit I 2 (197 aa).

2 4Fe-4S ferredoxin-type domains span residues 42–71 (GVIG…IDSH) and 91–120 (DRFA…WSPE). [4Fe-4S] cluster contacts are provided by cysteine 51, cysteine 54, cysteine 57, cysteine 61, cysteine 100, cysteine 103, cysteine 106, and cysteine 110. A disordered region spans residues 147-197 (APPALDPGAEEPKELAAARKAADKLAAQQQPDQPGPDHPGQPDESGQEGRT). The span at 156–169 (EEPKELAAARKAAD) shows a compositional bias: basic and acidic residues.

The protein belongs to the complex I 23 kDa subunit family. As to quaternary structure, NDH-1 is composed of 14 different subunits. Subunits NuoA, H, J, K, L, M, N constitute the membrane sector of the complex. Requires [4Fe-4S] cluster as cofactor.

The protein localises to the cell membrane. The enzyme catalyses a quinone + NADH + 5 H(+)(in) = a quinol + NAD(+) + 4 H(+)(out). Functionally, NDH-1 shuttles electrons from NADH, via FMN and iron-sulfur (Fe-S) centers, to quinones in the respiratory chain. The immediate electron acceptor for the enzyme in this species is believed to be ubiquinone. Couples the redox reaction to proton translocation (for every two electrons transferred, four hydrogen ions are translocated across the cytoplasmic membrane), and thus conserves the redox energy in a proton gradient. The polypeptide is NADH-quinone oxidoreductase subunit I 2 (Streptomyces coelicolor (strain ATCC BAA-471 / A3(2) / M145)).